We begin with the raw amino-acid sequence, 516 residues long: 2,3-bisphosphoglycerate-independent phosphoglycerate mutase (516 aa).

Mn(2+) contacts are provided by aspartate 14 and serine 64. Catalysis depends on serine 64, which acts as the Phosphoserine intermediate. Residues histidine 125, arginine 155 to aspartate 156, arginine 187, arginine 193, arginine 263 to arginine 266, and lysine 337 each bind substrate. Residues aspartate 404, histidine 408, aspartate 445, histidine 446, and histidine 464 each contribute to the Mn(2+) site.

It belongs to the BPG-independent phosphoglycerate mutase family. In terms of assembly, monomer. It depends on Mn(2+) as a cofactor.

The catalysed reaction is (2R)-2-phosphoglycerate = (2R)-3-phosphoglycerate. It participates in carbohydrate degradation; glycolysis; pyruvate from D-glyceraldehyde 3-phosphate: step 3/5. Catalyzes the interconversion of 2-phosphoglycerate and 3-phosphoglycerate. The chain is 2,3-bisphosphoglycerate-independent phosphoglycerate mutase from Saccharophagus degradans (strain 2-40 / ATCC 43961 / DSM 17024).